The following is a 149-amino-acid chain: MAEAPHTLKFERLRKRPDFLLAAKAPALSRGAVFIQMRQRTDDDPTVRVGFTATKKIGGAVERNRAKRRLREAARLVLPLHARPSHDYVFIARGGTGTREWARLLDDVKTALISLAADLDRGGTKVSRRSNGALHDAAPSSQPDPTVSG.

Positions 123–149 are disordered; the sequence is GTKVSRRSNGALHDAAPSSQPDPTVSG. A compositionally biased stretch (polar residues) spans 139–149; that stretch reads PSSQPDPTVSG.

This sequence belongs to the RnpA family. Consists of a catalytic RNA component (M1 or rnpB) and a protein subunit.

It carries out the reaction Endonucleolytic cleavage of RNA, removing 5'-extranucleotides from tRNA precursor.. Functionally, RNaseP catalyzes the removal of the 5'-leader sequence from pre-tRNA to produce the mature 5'-terminus. It can also cleave other RNA substrates such as 4.5S RNA. The protein component plays an auxiliary but essential role in vivo by binding to the 5'-leader sequence and broadening the substrate specificity of the ribozyme. The protein is Ribonuclease P protein component of Caulobacter vibrioides (strain ATCC 19089 / CIP 103742 / CB 15) (Caulobacter crescentus).